The chain runs to 391 residues: Serine acetyltransferase 3, mitochondrial (391 aa).

Disordered regions lie at residues 40-82 and 353-375; these read KHHT…HDDE and VGNPARLLGGKDNPKTHDKIPGL. The segment covering 45–56 has biased composition (pro residues); it reads SPPPSPPPPPPM.

It belongs to the transferase hexapeptide repeat family. As to quaternary structure, homomultimer. Interacts with OASC. Component of the cysteine synthase complex (CSC) composed of two OAS-TL dimers and one SAT hexamer. Ubiquitous with higher levels in leaves and siliques. Localized in vascular tissues, particularly in phloem.

Its subcellular location is the mitochondrion. The catalysed reaction is L-serine + acetyl-CoA = O-acetyl-L-serine + CoA. It participates in amino-acid biosynthesis; L-cysteine biosynthesis; L-cysteine from L-serine: step 1/2. The protein is Serine acetyltransferase 3, mitochondrial (SAT3) of Arabidopsis thaliana (Mouse-ear cress).